A 369-amino-acid polypeptide reads, in one-letter code: Superinfection exclusion protein (369 aa).

The N-terminal stretch at 1 to 15 (MIALLILSLTCSAST) is a signal peptide.

It belongs to the serpin family. Orthopoxvirus OPG040 subfamily. As to quaternary structure, interacts with A56 protein.

The protein localises to the virion membrane. The protein resides in the host cell membrane. Its function is as follows. Prevents cell to cell fusion via its interaction with A56 protein. The A56-K2 complex associates with components of the entry fusion complex (EFC) presumably to avoid superinfection and syncytium formation. The chain is Superinfection exclusion protein (OPG040) from Vaccinia virus (strain Ankara) (VACV).